The sequence spans 346 residues: Phosphoribosylformylglycinamidine cyclo-ligase (346 aa).

The protein belongs to the AIR synthase family.

It localises to the cytoplasm. It carries out the reaction 2-formamido-N(1)-(5-O-phospho-beta-D-ribosyl)acetamidine + ATP = 5-amino-1-(5-phospho-beta-D-ribosyl)imidazole + ADP + phosphate + H(+). The protein operates within purine metabolism; IMP biosynthesis via de novo pathway; 5-amino-1-(5-phospho-D-ribosyl)imidazole from N(2)-formyl-N(1)-(5-phospho-D-ribosyl)glycinamide: step 2/2. In Bacillus cereus (strain B4264), this protein is Phosphoribosylformylglycinamidine cyclo-ligase.